Reading from the N-terminus, the 538-residue chain is Lipid scramblase CLPTM1L (538 aa).

Topologically, residues 1-10 are cytoplasmic; the sequence is MWSGRSSFTS. A helical transmembrane segment spans residues 11-31; that stretch reads LVVGVFVVYVVHTCWVMYGIV. Topologically, residues 32-284 are extracellular; it reads YTRPCSGHGR…VKGIFVDTNL (253 aa). Residues Asn91 and Asn101 are each glycosylated (N-linked (GlcNAc...) asparagine). Residues 285–305 traverse the membrane as a helical segment; that stretch reads YFLALTFFVAAFHLLFDFLAF. Residues 306-324 are Cytoplasmic-facing; the sequence is KNDISFWKKKKSMIGMSTK. A helical membrane pass occupies residues 325-341; it reads AVLWRCFSTVVIFLFLL. Over 342–402 the chain is Extracellular; the sequence is DEQTSLPVLV…TEEYDAQAMK (61 aa). The chain crosses the membrane as a helical span at residues 403–423; the sequence is YLSYLLYPLCIGGAIYSLLNI. The Cytoplasmic portion of the chain corresponds to 424-428; sequence KYKSW. The helical transmembrane segment at 429 to 449 threads the bilayer; it reads YSWLINSFVNGVYAFGFLFML. Residues 450–538 lie on the Extracellular side of the membrane; that stretch reads PQLFVNYKMK…DTPQRKPHTD (89 aa).

This sequence belongs to the CLPTM1 family.

Its subcellular location is the endoplasmic reticulum membrane. The catalysed reaction is a 6-(alpha-D-glucosaminyl)-1-(1,2-diacyl-sn-glycero-3-phospho)-1D-myo-inositol(in) = a 6-(alpha-D-glucosaminyl)-1-(1,2-diacyl-sn-glycero-3-phospho)-1D-myo-inositol(out). It catalyses the reaction 6-(alpha-D-glucosaminyl)-(1-octadecanoyl,2-(9Z)-octadecenoyl-sn-glycero-3-phospho)-1D-myo-inositol(in) = 6-(alpha-D-glucosaminyl)-(1-octadecanoyl,2-(9Z)-octadecenoyl-sn-glycero-3-phospho)-1D-myo-inositol(out). It carries out the reaction a 1,2-diacyl-sn-glycero-3-phospho-(1D-myo-inositol)(in) = a 1,2-diacyl-sn-glycero-3-phospho-(1D-myo-inositol)(out). The enzyme catalyses a 1,2-diacyl-sn-glycero-3-phosphocholine(in) = a 1,2-diacyl-sn-glycero-3-phosphocholine(out). The catalysed reaction is a 1,2-diacyl-sn-glycero-3-phosphoethanolamine(in) = a 1,2-diacyl-sn-glycero-3-phosphoethanolamine(out). Its function is as follows. Scramblase that mediates the translocation of glucosaminylphosphatidylinositol (alpha-D-GlcN-(1-6)-(1,2-diacyl-sn-glycero-3-phospho)-1D-myo-inositol, GlcN-PI) across the endoplasmic reticulum (ER) membrane, from the cytosolic leaflet to the luminal leaflet of the ER membrane, where it participates in the biosynthesis of glycosylphosphatidylinositol (GPI). GPI is a lipid glycoconjugate involved in post-translational modification of proteins. Can also translocate 1,2-diacyl-sn-glycero-3-phospho-(1D-myo-inositol) (phosphatidylinositol or PI), as well as several other phospholipids (1,2-diacyl-sn-glycero-3-phosphocholine, 1,2-diacyl-sn-glycero-3-phosphoethanolamine), and N-acetylglucosaminylphosphatidylinositol (GlcNAc-PI) in vitro. This chain is Lipid scramblase CLPTM1L (CLPTM1L), found in Bos taurus (Bovine).